The following is a 182-amino-acid chain: Putative manganese efflux pump MntP (182 aa).

The next 6 helical transmembrane spans lie at 7 to 27, 38 to 58, 71 to 91, 106 to 126, 131 to 151, and 159 to 179; these read IISIILLAIGLSMDGFSVSLG, IAYIGLTIGFLHMLMPLAGML, TSFAGGVLLFLIGAHMFFSAF, LWIIAFSVSLDSFTVGLGLGI, IFVTLFAFGIVSCFLTWLGML, and FLGVYSELLGGSILCGFGIFI.

It belongs to the MntP (TC 9.B.29) family.

The protein resides in the cell membrane. Its function is as follows. Probably functions as a manganese efflux pump. The polypeptide is Putative manganese efflux pump MntP (Oceanobacillus iheyensis (strain DSM 14371 / CIP 107618 / JCM 11309 / KCTC 3954 / HTE831)).